A 212-amino-acid chain; its full sequence is Riboflavin synthase (212 aa).

2 Lumazine-binding repeats span residues 1–97 and 98–195; these read MFTG…VGGH and LVSG…VDSV. Residues 4 to 6, 48 to 50, 62 to 67, 101 to 103, lysine 137, 146 to 148, and 160 to 165 contribute to the 2,4-dihydroxypteridine site; these read GIV, CLT, DIVEET, GHI, SLT, and FLIPET.

As to quaternary structure, homotrimer.

It carries out the reaction 2 6,7-dimethyl-8-(1-D-ribityl)lumazine + H(+) = 5-amino-6-(D-ribitylamino)uracil + riboflavin. It functions in the pathway cofactor biosynthesis; riboflavin biosynthesis; riboflavin from 2-hydroxy-3-oxobutyl phosphate and 5-amino-6-(D-ribitylamino)uracil: step 2/2. Catalyzes the dismutation of two molecules of 6,7-dimethyl-8-ribityllumazine, resulting in the formation of riboflavin and 5-amino-6-(D-ribitylamino)uracil. The polypeptide is Riboflavin synthase (ribE) (Buchnera aphidicola subsp. Baizongia pistaciae (strain Bp)).